The following is a 152-amino-acid chain: Glutamyl-tRNA(Gln) amidotransferase subunit F, mitochondrial (152 aa).

Belongs to the GatF family. In terms of assembly, subunit of the heterotrimeric GatFAB amidotransferase (AdT) complex, composed of A, B and F subunits.

The protein resides in the mitochondrion inner membrane. The catalysed reaction is L-glutamyl-tRNA(Gln) + L-glutamine + ATP + H2O = L-glutaminyl-tRNA(Gln) + L-glutamate + ADP + phosphate + H(+). Its function is as follows. Allows the formation of correctly charged Gln-tRNA(Gln) through the transamidation of misacylated Glu-tRNA(Gln) in the mitochondria. The reaction takes place in the presence of glutamine and ATP through an activated gamma-phospho-Glu-tRNA(Gln). Required for proper protein synthesis within the mitochondrion. The polypeptide is Glutamyl-tRNA(Gln) amidotransferase subunit F, mitochondrial (Komagataella phaffii (strain GS115 / ATCC 20864) (Yeast)).